The chain runs to 505 residues: 2,3-bisphosphoglycerate-independent phosphoglycerate mutase (505 aa).

Positions 12 and 62 each coordinate Mn(2+). The Phosphoserine intermediate role is filled by Ser-62. Substrate-binding positions include His-123, 153–154 (RD), Arg-185, Arg-191, 257–260 (RPDR), and Lys-330. Mn(2+) contacts are provided by Asp-397, His-401, Asp-438, His-439, and His-456.

The protein belongs to the BPG-independent phosphoglycerate mutase family. Monomer. The cofactor is Mn(2+).

The catalysed reaction is (2R)-2-phosphoglycerate = (2R)-3-phosphoglycerate. The protein operates within carbohydrate degradation; glycolysis; pyruvate from D-glyceraldehyde 3-phosphate: step 3/5. In terms of biological role, catalyzes the interconversion of 2-phosphoglycerate and 3-phosphoglycerate. This chain is 2,3-bisphosphoglycerate-independent phosphoglycerate mutase, found in Staphylococcus aureus (strain COL).